A 288-amino-acid polypeptide reads, in one-letter code: 4-diphosphocytidyl-2-C-methyl-D-erythritol kinase (288 aa).

Lys8 is a catalytic residue. 92-102 (PVAAGMAGGST) contacts ATP. Asp134 is an active-site residue.

The protein belongs to the GHMP kinase family. IspE subfamily.

The catalysed reaction is 4-CDP-2-C-methyl-D-erythritol + ATP = 4-CDP-2-C-methyl-D-erythritol 2-phosphate + ADP + H(+). The protein operates within isoprenoid biosynthesis; isopentenyl diphosphate biosynthesis via DXP pathway; isopentenyl diphosphate from 1-deoxy-D-xylulose 5-phosphate: step 3/6. Its function is as follows. Catalyzes the phosphorylation of the position 2 hydroxy group of 4-diphosphocytidyl-2C-methyl-D-erythritol. In Clostridium perfringens (strain ATCC 13124 / DSM 756 / JCM 1290 / NCIMB 6125 / NCTC 8237 / Type A), this protein is 4-diphosphocytidyl-2-C-methyl-D-erythritol kinase.